Consider the following 65-residue polypeptide: Sarcoplasmic/endoplasmic reticulum calcium ATPase regulator ARLN (65 aa).

Met-1 bears the N-acetylmethionine mark. The interval 1–36 (MEVSQAASGTDGVRERRGSFEAGRRNQDEAPQSGMN) is disordered. Residues 12-28 (GVRERRGSFEAGRRNQD) show a composition bias toward basic and acidic residues. Ser-19 carries the post-translational modification Phosphoserine. A helical transmembrane segment spans residues 44–64 (WLDLWLFILFDLALFVFVYLL).

Homooligomer. Can also form heterooligomers with other sarcoplasmic/endoplasmic reticulum calcium ATPase (SERCA) regulators ERLN, PLN, SLN and STRIT1/DWORF. Monomer. Interacts as a monomer with ATP2A2/SERCA2; the interaction results in inhibition of ATP2A2 Ca(2+) affinity. In the embryo, expressed in heart, epidermal epithelium, salivary gland, brown fat, intestinal epithelium and bladder urothelium.

It is found in the endoplasmic reticulum membrane. Its function is as follows. Inhibits the activity of the calcium ATPases ATP2A2/SERCA2 and ATP2A3/SERCA3 by decreasing their apparent affinity for Ca(2+). In Mus musculus (Mouse), this protein is Sarcoplasmic/endoplasmic reticulum calcium ATPase regulator ARLN (Arln).